Reading from the N-terminus, the 95-residue chain is Small ribosomal subunit protein bS6 (95 aa).

Belongs to the bacterial ribosomal protein bS6 family.

Functionally, binds together with bS18 to 16S ribosomal RNA. This is Small ribosomal subunit protein bS6 from Clostridium acetobutylicum (strain ATCC 824 / DSM 792 / JCM 1419 / IAM 19013 / LMG 5710 / NBRC 13948 / NRRL B-527 / VKM B-1787 / 2291 / W).